Consider the following 261-residue polypeptide: MLIVLSPAKSLDYETPARTKTHTLPRFIERSAVLIDRLRKLAPQDVGALMDISDKLAVLNVTRYAEWSETFTAANSKQAVLAFNGDVYDGFDAKSLSADDLGFAQKHVRILSGLYGVLRPMDWMQPYRLEMGTRLDNAAGKDLYAFWGDDVTRLLNDDMAGLKHEGAPTLVNLASEEYFKVVRPKVLNARIITPVFEDWKGGRYKIISFHAKRARGTMARYAVTHRVTEPAALKRFAEDGYAFDAAASNDGRWVFRRRLED.

This sequence belongs to the UPF0246 family.

This chain is UPF0246 protein Reut_A1014, found in Cupriavidus pinatubonensis (strain JMP 134 / LMG 1197) (Cupriavidus necator (strain JMP 134)).